The chain runs to 603 residues: Isocitrate dehydrogenase kinase/phosphatase (603 aa).

ATP contacts are provided by residues Ala327 to Leu333 and Lys348. Asp383 is an active-site residue.

This sequence belongs to the AceK family.

The protein resides in the cytoplasm. The enzyme catalyses L-seryl-[isocitrate dehydrogenase] + ATP = O-phospho-L-seryl-[isocitrate dehydrogenase] + ADP + H(+). Its function is as follows. Bifunctional enzyme which can phosphorylate or dephosphorylate isocitrate dehydrogenase (IDH) on a specific serine residue. This is a regulatory mechanism which enables bacteria to bypass the Krebs cycle via the glyoxylate shunt in response to the source of carbon. When bacteria are grown on glucose, IDH is fully active and unphosphorylated, but when grown on acetate or ethanol, the activity of IDH declines drastically concomitant with its phosphorylation. This Burkholderia thailandensis (strain ATCC 700388 / DSM 13276 / CCUG 48851 / CIP 106301 / E264) protein is Isocitrate dehydrogenase kinase/phosphatase.